The sequence spans 319 residues: Transaldolase (319 aa).

K131 functions as the Schiff-base intermediate with substrate in the catalytic mechanism.

This sequence belongs to the transaldolase family. Type 1 subfamily. As to quaternary structure, homodimer.

The protein resides in the cytoplasm. It carries out the reaction D-sedoheptulose 7-phosphate + D-glyceraldehyde 3-phosphate = D-erythrose 4-phosphate + beta-D-fructose 6-phosphate. It functions in the pathway carbohydrate degradation; pentose phosphate pathway; D-glyceraldehyde 3-phosphate and beta-D-fructose 6-phosphate from D-ribose 5-phosphate and D-xylulose 5-phosphate (non-oxidative stage): step 2/3. In terms of biological role, transaldolase is important for the balance of metabolites in the pentose-phosphate pathway. This Wigglesworthia glossinidia brevipalpis protein is Transaldolase.